We begin with the raw amino-acid sequence, 132 residues long: Urease subunit beta (132 aa).

Belongs to the urease beta subunit family. In terms of assembly, heterotrimer of UreA (gamma), UreB (beta) and UreC (alpha) subunits. Three heterotrimers associate to form the active enzyme.

The protein resides in the cytoplasm. It catalyses the reaction urea + 2 H2O + H(+) = hydrogencarbonate + 2 NH4(+). It participates in nitrogen metabolism; urea degradation; CO(2) and NH(3) from urea (urease route): step 1/1. In Natronomonas pharaonis (strain ATCC 35678 / DSM 2160 / CIP 103997 / JCM 8858 / NBRC 14720 / NCIMB 2260 / Gabara) (Halobacterium pharaonis), this protein is Urease subunit beta.